The primary structure comprises 145 residues: 3-hydroxyacyl-[acyl-carrier-protein] dehydratase FabZ (145 aa).

Residue histidine 47 is part of the active site.

Belongs to the thioester dehydratase family. FabZ subfamily.

It is found in the cytoplasm. It carries out the reaction a (3R)-hydroxyacyl-[ACP] = a (2E)-enoyl-[ACP] + H2O. Functionally, involved in unsaturated fatty acids biosynthesis. Catalyzes the dehydration of short chain beta-hydroxyacyl-ACPs and long chain saturated and unsaturated beta-hydroxyacyl-ACPs. This chain is 3-hydroxyacyl-[acyl-carrier-protein] dehydratase FabZ, found in Methylobacillus flagellatus (strain ATCC 51484 / DSM 6875 / VKM B-1610 / KT).